A 644-amino-acid polypeptide reads, in one-letter code: Protein DA1-related 6 (644 aa).

UIM domains follow at residues 119–138, 181–200, and 244–263; these read EEDE…NNRR, DVDE…KGKG, and DEDE…KGQI. The 72-residue stretch at 284–355 folds into the LIM zinc-binding domain; it reads SLCGGCNFAV…YVCKEKKMKT (72 aa). Residues 572-589 are compositionally biased toward low complexity; the sequence is ASSSASSSSRTPPAASAS. Residues 572 to 591 form a disordered region; that stretch reads ASSSASSSSRTPPAASASKK.

Interacts with ubiquitin.

Its function is as follows. Ubiquitin receptor that probably regulates developmental process. This chain is Protein DA1-related 6 (DAR6), found in Arabidopsis thaliana (Mouse-ear cress).